We begin with the raw amino-acid sequence, 971 residues long: Kinesin-like protein KIN-6 (971 aa).

2 disordered regions span residues 1-44 (MEEK…SSLA) and 93-121 (TTTTKSRPRNVWPQNPSKKNNAKENRNPE). The span at 29–39 (ATPFTTTTKPP) shows a compositional bias: low complexity. Residues 76–460 (SLKIFLRIKP…LRQASPYMKI (385 aa)) enclose the Kinesin motor domain. 202–209 (GPSGSGKT) serves as a coordination point for ATP. Over residues 700 to 709 (RREAGSEESS) the composition is skewed to basic and acidic residues. 2 disordered regions span residues 700–856 (RREA…TEEM) and 872–917 (KTTN…RLQP). The span at 768–783 (QSVNSEENVGIPSTIT) shows a compositional bias: polar residues. A compositionally biased stretch (basic and acidic residues) spans 785–797 (VEAEVTDFQRDQN). Positions 809 to 827 (EVSQDCINSGLSNVQTKSA) are enriched in polar residues. Basic and acidic residues predominate over residues 831–842 (RFPDSEKQERNR). The segment covering 903–915 (KKQKNGQKPKRRL) has biased composition (basic residues).

It belongs to the TRAFAC class myosin-kinesin ATPase superfamily. Kinesin family. KIN-6 subfamily.

The chain is Kinesin-like protein KIN-6 from Arabidopsis thaliana (Mouse-ear cress).